Here is a 497-residue protein sequence, read N- to C-terminus: MTALFPFDNSYARLPSHFFGRVAPTAVEAPRLIRLNRALAVDLGLDPDRLESPEGVEVLAGQRVPEGAEPLAAAYAGHQFGQFVPQLGDGRAILLGEVVGRDGRRDIQLKGSGPTPFSRRGDGRAALGPVLREYLVSEAMHALGIPTTRALAAVTTGEQVIRETALPGAVLTRVASSHIRVGSFQFFAARGDVEGLRALADHAIARHDPEAARADNPYRALLDGVIRRQAALVARWLTVGFIHGVMNTDNMSIAGETIDYGPCAFLDTYDPATAFSSIDRHGRYAYGNQPRIALWNLTRLAEALLPLLSEDETQAVGEAEAALTGFAGQFEAAYHGGLNRKLGLATTRDGDPALAGDLLKTMAENEADFTLTFRRLGEAVPGPDGEPDPAAVEAVRSLFIDPTAYDRWAEGWRRRLKDEAGDAAARRQMMRAANPAFILRNHRVEEMITAAVERQDFAPFETLLTVLARPYEDQPDFARYAEPPEGGGRGYRTFCGT.

Residues Gly88, Gly90, Arg91, Lys110, Asp122, Gly123, Arg173, and Arg180 each coordinate ATP. Asp249 serves as the catalytic Proton acceptor. Positions 250 and 259 each coordinate Mg(2+). An ATP-binding site is contributed by Asp259. The segment at 477 to 497 (FARYAEPPEGGGRGYRTFCGT) is disordered.

Belongs to the SELO family. It depends on Mg(2+) as a cofactor. Requires Mn(2+) as cofactor.

The enzyme catalyses L-seryl-[protein] + ATP = 3-O-(5'-adenylyl)-L-seryl-[protein] + diphosphate. The catalysed reaction is L-threonyl-[protein] + ATP = 3-O-(5'-adenylyl)-L-threonyl-[protein] + diphosphate. It catalyses the reaction L-tyrosyl-[protein] + ATP = O-(5'-adenylyl)-L-tyrosyl-[protein] + diphosphate. It carries out the reaction L-histidyl-[protein] + UTP = N(tele)-(5'-uridylyl)-L-histidyl-[protein] + diphosphate. The enzyme catalyses L-seryl-[protein] + UTP = O-(5'-uridylyl)-L-seryl-[protein] + diphosphate. The catalysed reaction is L-tyrosyl-[protein] + UTP = O-(5'-uridylyl)-L-tyrosyl-[protein] + diphosphate. In terms of biological role, nucleotidyltransferase involved in the post-translational modification of proteins. It can catalyze the addition of adenosine monophosphate (AMP) or uridine monophosphate (UMP) to a protein, resulting in modifications known as AMPylation and UMPylation. This Methylorubrum extorquens (strain PA1) (Methylobacterium extorquens) protein is Protein nucleotidyltransferase YdiU.